We begin with the raw amino-acid sequence, 209 residues long: High frequency lysogenization protein HflD homolog (209 aa).

It belongs to the HflD family.

It is found in the cytoplasm. The protein resides in the cell inner membrane. This Marinomonas sp. (strain MWYL1) protein is High frequency lysogenization protein HflD homolog.